The sequence spans 1764 residues: Cilia- and flagella-associated protein 44 (1764 aa).

7 WD repeats span residues 115–157 (GTER…IVLR), 160–199 (AFSQ…TGLK), 208–248 (GNVE…VVLT), 255–294 (CHDG…DAEP), 361–400 (HPAG…VLAE), 454–493 (AHKG…QPGT), and 495–534 (VPGM…GVLL). The segment at 570–654 (QLVVPKPKRP…GGPSSTTGEL (85 aa)) is disordered. Positions 575–584 (KPKRPKKKKG) are enriched in basic residues. 2 stretches are compositionally biased toward basic and acidic residues: residues 585–596 (KNDGEEGDKEGG) and 604–628 (GEDK…GRAA). Residues 629–641 (EEEEEEEADDEAD) show a composition bias toward acidic residues. WD repeat units lie at residues 649-692 (STTG…PLAA), 707-752 (AHAG…LHDM), and 753-791 (QSGR…ELAP). Residues 821–850 (YTLEEEKQQAERDQQVREAEEKKLSVRQRL) are a coiled coil. Disordered regions lie at residues 972–1003 (AAAG…GDAA) and 1426–1468 (KKKA…CPPG). The segment covering 1434-1462 (GEDDYDSEEDEEDEDMGDDEVDDDDDGGE) has biased composition (acidic residues). Coiled coils occupy residues 1479–1517 (DLRE…LVEQ), 1567–1674 (LVFS…DAKI), and 1729–1758 (EERD…LRRK).

Belongs to the CFAP44 family.

It localises to the cell projection. It is found in the cilium. The protein localises to the flagellum. Its subcellular location is the cytoplasm. The protein resides in the cytoskeleton. It localises to the flagellum axoneme. In terms of biological role, flagellar protein involved in sperm flagellum axoneme organization and function. This Chlamydomonas reinhardtii (Chlamydomonas smithii) protein is Cilia- and flagella-associated protein 44.